We begin with the raw amino-acid sequence, 396 residues long: Subtilisin-like protease 5 (396 aa).

The first 20 residues, 1–20, serve as a signal peptide directing secretion; the sequence is MTGFLTILSLSLAALSVTNA. Positions 21-116 are excised as a propeptide; it reads AQILSVPQGA…VEPDAIIKQH (96 aa). Residues 37–114 form the Inhibitor I9 domain; the sequence is YIVVMKDDTS…AFVEPDAIIK (78 aa). A Peptidase S8 domain is found at 125-396; the sequence is PWGLSRLSNR…SRLLYNGSGR (272 aa). Residues Asp156 and His187 each act as charge relay system in the active site. Residues Asn230 and Asn248 are each glycosylated (N-linked (GlcNAc...) asparagine). Residue Ser342 is the Charge relay system of the active site. Positions 376–396 are disordered; the sequence is PTIRNPGPDTTSRLLYNGSGR. A glycan (N-linked (GlcNAc...) asparagine) is linked at Asn392.

It belongs to the peptidase S8 family.

The protein resides in the secreted. Its function is as follows. Secreted subtilisin-like serine protease with keratinolytic activity that contributes to pathogenicity. The protein is Subtilisin-like protease 5 (SUB5) of Arthroderma gypseum (strain ATCC MYA-4604 / CBS 118893) (Microsporum gypseum).